The following is an 828-amino-acid chain: Periplasmic nitrate reductase (828 aa).

Positions Met-1–Ala-31 form a signal peptide, tat-type signal. Residues Ile-39–Asp-95 enclose the 4Fe-4S Mo/W bis-MGD-type domain. 4 residues coordinate [4Fe-4S] cluster: Cys-46, Cys-49, Cys-53, and Cys-81. Residues Lys-83, Gln-150, Asn-175, Cys-179, Trp-212–Met-219, Ser-243–His-247, Gln-262–Asp-264, Met-372, Gln-376, Asn-482, Ser-508–Asp-509, Lys-531, Asp-558, and Thr-718–Thr-727 each bind Mo-bis(molybdopterin guanine dinucleotide). Phe-794 is a substrate binding site. Mo-bis(molybdopterin guanine dinucleotide)-binding residues include Asn-802 and Lys-819.

It belongs to the prokaryotic molybdopterin-containing oxidoreductase family. NasA/NapA/NarB subfamily. As to quaternary structure, component of the periplasmic nitrate reductase NapAB complex composed of NapA and NapB. It depends on [4Fe-4S] cluster as a cofactor. Mo-bis(molybdopterin guanine dinucleotide) serves as cofactor. Post-translationally, predicted to be exported by the Tat system. The position of the signal peptide cleavage has not been experimentally proven.

The protein resides in the periplasm. It catalyses the reaction 2 Fe(II)-[cytochrome] + nitrate + 2 H(+) = 2 Fe(III)-[cytochrome] + nitrite + H2O. In terms of biological role, catalytic subunit of the periplasmic nitrate reductase complex NapAB. Receives electrons from NapB and catalyzes the reduction of nitrate to nitrite. The protein is Periplasmic nitrate reductase of Salmonella agona (strain SL483).